A 494-amino-acid chain; its full sequence is Flap endonuclease 1 (494 aa).

The tract at residues 1-106 (MGIKGLIPFL…KTLEKRRQQR (106 aa)) is N-domain. Asp34 contacts Mg(2+). 2 residues coordinate DNA: Arg47 and Arg72. 5 residues coordinate Mg(2+): Asp88, Glu160, Glu162, Asp181, and Asp183. Residues 124–253 (SVKKLVGRTV…KTAYSLVKKY (130 aa)) are I-domain. A DNA-binding site is contributed by Glu160. Residues Gly231 and Asp233 each coordinate DNA. Asp233 provides a ligand contact to Mg(2+). The interaction with PCNA stretch occupies residues 330 to 338 (IQTSLLSFL). Disordered regions lie at residues 341 to 382 (PQHN…ESST) and 395 to 426 (LFCE…ENET). Residues 408–426 (DRGRVDKNEDLFKKSENET) show a composition bias toward basic and acidic residues.

It belongs to the XPG/RAD2 endonuclease family. FEN1 subfamily. Interacts with PCNA. Three molecules of FEN1 bind to one PCNA trimer with each molecule binding to one PCNA monomer. PCNA stimulates the nuclease activity without altering cleavage specificity. The cofactor is Mg(2+). Post-translationally, phosphorylated. Phosphorylation upon DNA damage induces relocalization to the nuclear plasma.

It is found in the nucleus. It localises to the nucleolus. The protein localises to the nucleoplasm. Its subcellular location is the mitochondrion. Its function is as follows. Structure-specific nuclease with 5'-flap endonuclease and 5'-3' exonuclease activities involved in DNA replication and repair. During DNA replication, cleaves the 5'-overhanging flap structure that is generated by displacement synthesis when DNA polymerase encounters the 5'-end of a downstream Okazaki fragment. It enters the flap from the 5'-end and then tracks to cleave the flap base, leaving a nick for ligation. Also involved in the long patch base excision repair (LP-BER) pathway, by cleaving within the apurinic/apyrimidinic (AP) site-terminated flap. Acts as a genome stabilization factor that prevents flaps from equilibrating into structures that lead to duplications and deletions. Also possesses 5'-3' exonuclease activity on nicked or gapped double-stranded DNA, and exhibits RNase H activity. Also involved in replication and repair of rDNA and in repairing mitochondrial DNA. This Theileria parva (East coast fever infection agent) protein is Flap endonuclease 1.